We begin with the raw amino-acid sequence, 381 residues long: Queuine tRNA-ribosyltransferase (381 aa).

Catalysis depends on D96, which acts as the Proton acceptor. Substrate-binding positions include 96–100 (DSGGF), D150, Q193, and G220. The interval 251 to 257 (GVGSPDS) is RNA binding. The active-site Nucleophile is the D270. The RNA binding; important for wobble base 34 recognition stretch occupies residues 275–279 (TRIAR). Residues C308, C310, C313, and H339 each coordinate Zn(2+).

It belongs to the queuine tRNA-ribosyltransferase family. As to quaternary structure, homodimer. Within each dimer, one monomer is responsible for RNA recognition and catalysis, while the other monomer binds to the replacement base PreQ1. Zn(2+) is required as a cofactor.

It carries out the reaction 7-aminomethyl-7-carbaguanine + guanosine(34) in tRNA = 7-aminomethyl-7-carbaguanosine(34) in tRNA + guanine. It functions in the pathway tRNA modification; tRNA-queuosine biosynthesis. Catalyzes the base-exchange of a guanine (G) residue with the queuine precursor 7-aminomethyl-7-deazaguanine (PreQ1) at position 34 (anticodon wobble position) in tRNAs with GU(N) anticodons (tRNA-Asp, -Asn, -His and -Tyr). Catalysis occurs through a double-displacement mechanism. The nucleophile active site attacks the C1' of nucleotide 34 to detach the guanine base from the RNA, forming a covalent enzyme-RNA intermediate. The proton acceptor active site deprotonates the incoming PreQ1, allowing a nucleophilic attack on the C1' of the ribose to form the product. After dissociation, two additional enzymatic reactions on the tRNA convert PreQ1 to queuine (Q), resulting in the hypermodified nucleoside queuosine (7-(((4,5-cis-dihydroxy-2-cyclopenten-1-yl)amino)methyl)-7-deazaguanosine). In Lysinibacillus sphaericus (strain C3-41), this protein is Queuine tRNA-ribosyltransferase.